Consider the following 309-residue polypeptide: Tyrosine recombinase XerD (309 aa).

Residues 3–88 (MRASLAIENF…ALRQFFRFLY (86 aa)) enclose the Core-binding (CB) domain. Residues 109–302 (PLPKIMSVEN…LEERLHKLVS (194 aa)) enclose the Tyr recombinase domain. Catalysis depends on residues Arg158, Lys182, His254, Arg257, and His280. Tyr289 acts as the O-(3'-phospho-DNA)-tyrosine intermediate in catalysis.

It belongs to the 'phage' integrase family. XerD subfamily. Forms a cyclic heterotetrameric complex composed of two molecules of XerC and two molecules of XerD.

It localises to the cytoplasm. Its function is as follows. Site-specific tyrosine recombinase, which acts by catalyzing the cutting and rejoining of the recombining DNA molecules. The XerC-XerD complex is essential to convert dimers of the bacterial chromosome into monomers to permit their segregation at cell division. It also contributes to the segregational stability of plasmids. The sequence is that of Tyrosine recombinase XerD from Brucella suis biovar 1 (strain 1330).